Here is a 112-residue protein sequence, read N- to C-terminus: UPF0212 protein Mhun_0078 (112 aa).

Belongs to the UPF0212 family.

The sequence is that of UPF0212 protein Mhun_0078 from Methanospirillum hungatei JF-1 (strain ATCC 27890 / DSM 864 / NBRC 100397 / JF-1).